The following is a 305-amino-acid chain: 2-oxoacid:ferredoxin oxidoreductase subunit beta (305 aa).

[4Fe-4S] cluster-binding residues include Cys-12, Cys-15, and Cys-46. Thiamine diphosphate contacts are provided by residues 44-47 (IGCS) and His-65. Asp-90 is a binding site for Mg(2+). 91–92 (GD) contacts thiamine diphosphate. Positions 118 and 120 each coordinate Mg(2+). 122-123 (GL) serves as a coordination point for thiamine diphosphate. Cys-197 is a [4Fe-4S] cluster binding site.

Heterodimer composed of an alpha and a beta subunit. The cofactor is [4Fe-4S] cluster. It depends on thiamine diphosphate as a cofactor. Requires Mg(2+) as cofactor.

The protein resides in the cytoplasm. The enzyme catalyses a 2-oxocarboxylate + 2 oxidized [2Fe-2S]-[ferredoxin] + CoA = an acyl-CoA + 2 reduced [2Fe-2S]-[ferredoxin] + CO2 + H(+). Functionally, catalyzes the coenzyme A-dependent oxidative decarboxylation of different 2-oxoacids such as 2-oxoglutarate, pyruvate and 2-oxobutyrate to form their CoA derivatives. This chain is 2-oxoacid:ferredoxin oxidoreductase subunit beta, found in Sulfolobus sp.